Reading from the N-terminus, the 177-residue chain is 3-isopropylmalate dehydratase small subunit 1 (177 aa).

Residues 157-177 (GRFPGEEPGAEASTETASAAE) form a disordered region. Over residues 162–177 (EEPGAEASTETASAAE) the composition is skewed to low complexity.

It belongs to the LeuD family. LeuD type 2 subfamily. As to quaternary structure, heterodimer of LeuC and LeuD.

The catalysed reaction is (2R,3S)-3-isopropylmalate = (2S)-2-isopropylmalate. Its pathway is amino-acid biosynthesis; L-leucine biosynthesis; L-leucine from 3-methyl-2-oxobutanoate: step 2/4. Catalyzes the isomerization between 2-isopropylmalate and 3-isopropylmalate, via the formation of 2-isopropylmaleate. This Deinococcus radiodurans (strain ATCC 13939 / DSM 20539 / JCM 16871 / CCUG 27074 / LMG 4051 / NBRC 15346 / NCIMB 9279 / VKM B-1422 / R1) protein is 3-isopropylmalate dehydratase small subunit 1 (leuD1).